Consider the following 248-residue polypeptide: Isoprenyl transferase (248 aa).

Residue aspartate 28 is part of the active site. Aspartate 28 serves as a coordination point for Mg(2+). Substrate-binding positions include glycine 29–arginine 32, tryptophan 33, arginine 41, histidine 45, and serine 73–glutamate 75. The active-site Proton acceptor is asparagine 76. Residues tryptophan 77, arginine 79, arginine 196, and arginine 202 to serine 204 each bind substrate. Glutamate 215 lines the Mg(2+) pocket.

The protein belongs to the UPP synthase family. In terms of assembly, homodimer. The cofactor is Mg(2+).

Functionally, catalyzes the condensation of isopentenyl diphosphate (IPP) with allylic pyrophosphates generating different type of terpenoids. The protein is Isoprenyl transferase of Zymomonas mobilis subsp. mobilis (strain ATCC 31821 / ZM4 / CP4).